The following is a 205-amino-acid chain: Putative 3-methyladenine DNA glycosylase (205 aa).

It belongs to the DNA glycosylase MPG family.

This chain is Putative 3-methyladenine DNA glycosylase, found in Clostridium acetobutylicum (strain ATCC 824 / DSM 792 / JCM 1419 / IAM 19013 / LMG 5710 / NBRC 13948 / NRRL B-527 / VKM B-1787 / 2291 / W).